The chain runs to 397 residues: RNA binding protein fox-1 homolog 1 (397 aa).

The interval 1–121 (MNCEREQLRG…NKSQPKRLHV (121 aa)) is disordered. Residues 70 to 87 (QTHSEQSPADTSAQTVSG) show a composition bias toward polar residues. A compositionally biased stretch (low complexity) spans 88–99 (TATQTDDAAPTD). Positions 100-113 (GQPQTQPSENTENK) are enriched in polar residues. The 77-residue stretch at 117–193 (KRLHVSNIPF…RKIEVNNATA (77 aa)) folds into the RRM domain. Asymmetric dimethylarginine is present on R317. R388 carries the post-translational modification Omega-N-methylarginine.

As to quaternary structure, binds to the C-terminus of ATXN2. As to expression, predominantly expressed in muscle and brain.

The protein localises to the nucleus. The protein resides in the cytoplasm. In terms of biological role, RNA-binding protein that regulates alternative splicing events by binding to 5'-UGCAUGU-3' elements. Regulates alternative splicing of tissue-specific exons and of differentially spliced exons during erythropoiesis. This Homo sapiens (Human) protein is RNA binding protein fox-1 homolog 1 (RBFOX1).